The primary structure comprises 63 residues: 2-hydroxymuconate tautomerase (63 aa).

Catalysis depends on Pro-2, which acts as the Proton acceptor; via imino nitrogen.

Belongs to the 4-oxalocrotonate tautomerase family. Homohexamer.

The catalysed reaction is (2Z,4E)-2-hydroxyhexa-2,4-dienedioate = (3E)-2-oxohex-3-enedioate. It participates in aromatic compound metabolism; salicylate degradation. Its function is as follows. Catalyzes the ketonization of 2-hydroxymuconate stereoselectively to yield 2-oxo-3-hexenedioate. The chain is 2-hydroxymuconate tautomerase (nahJ) from Pseudomonas putida (Arthrobacter siderocapsulatus).